A 259-amino-acid polypeptide reads, in one-letter code: 5'-nucleotidase SurE (259 aa).

4 residues coordinate a divalent metal cation: Asp-15, Asp-16, Ser-46, and Asn-102.

It belongs to the SurE nucleotidase family. The cofactor is a divalent metal cation.

The protein resides in the cytoplasm. It carries out the reaction a ribonucleoside 5'-phosphate + H2O = a ribonucleoside + phosphate. In terms of biological role, nucleotidase that shows phosphatase activity on nucleoside 5'-monophosphates. The polypeptide is 5'-nucleotidase SurE (Chlorobium luteolum (strain DSM 273 / BCRC 81028 / 2530) (Pelodictyon luteolum)).